Consider the following 470-residue polypeptide: Syncoilin (470 aa).

The disordered stretch occupies residues 1–43; the sequence is MASPEPLRGGDGARASREPHTEASFPLQESESPKEAKTFNPEA. Residues 1–148 form a head region; it reads MASPEPLRGG…TEGSLPAQPI (148 aa). At Ser32 the chain carries Phosphoserine. Residues 157 to 452 form the IF rod domain; that stretch reads SVEDLERLEA…AMLPKSLEQA (296 aa). Positions 158 to 192 are coil 1A; that stretch reads VEDLERLEARFQQCVQAVSQLEEERDQLIHELVLL. Positions 193 to 219 are linker 1; sequence REPALQEVQQVHQDILAAYKLHAQAEL. Residues 220-297 are coil 1b; sequence ERDGLREEIR…KEQLQQQLEA (78 aa). The tract at residues 298–337 is linker 2; the sequence is PPTQSDGHFLQESRRLSTQFENLMAESRQGLEEEYEPQLL. At Ser314 the chain carries Phosphoserine. Residues 338–445 form a coil 2 region; that stretch reads RLLERKEAGT…EELSTYKAML (108 aa). Residues 446–470 form a disordered region; sequence PKSLEQADAPTSQAGGVEAQSPGTV. Positions 446–470 are tail; the sequence is PKSLEQADAPTSQAGGVEAQSPGTV.

Belongs to the intermediate filament family. May link the dystrophin-associated glycoprotein complex (DAPC) to intracellular desmin (DES) filaments. Interacts with DES and DTNA. In terms of tissue distribution, detected strongly in skeletal muscle and heart and weakly in lung (at protein level). Highly expressed in skeletal muscle and lung and weakly in lung and testis.

It localises to the cytoplasm. Its subcellular location is the perinuclear region. Functionally, atypical type III intermediate filament (IF) protein that may play a supportive role in the efficient coupling of mechanical stress between the myofibril and fiber exterior. May facilitate lateral force transmission during skeletal muscle contraction. Does not form homofilaments nor heterofilaments with other IF proteins. This chain is Syncoilin (Sync), found in Mus musculus (Mouse).